Reading from the N-terminus, the 86-residue chain is Conotoxin S6.10 (86 aa).

The first 22 residues, 1–22 (MKLTCVLIIAVLFLTACQLATA), serve as a signal peptide directing secretion. The propeptide occupies 23–45 (KTYSKGRQKHRALRSTDKNIKLT). 3 disulfides stabilise this stretch: cysteine 48/cysteine 62, cysteine 55/cysteine 66, and cysteine 61/cysteine 73.

Belongs to the conotoxin O1 superfamily. As to expression, expressed by the venom duct.

It is found in the secreted. The polypeptide is Conotoxin S6.10 (Conus striatus (Striated cone)).